The sequence spans 488 residues: Protein Notchless (488 aa).

Positions 1 to 22 are disordered; the sequence is MLAKKQKMQETDTEQEATPHTI. The interval 19-101 is ubiquitin-like (UBL) domain; sequence PHTIQARLVS…VIDIVYQPQA (83 aa). WD repeat units lie at residues 117–156, 159–198, 202–246, 249–287, 329–370, 373–412, 415–454, and 457–488; these read GHAE…PHFT, GHKQ…QKGR, GHKK…CLMN, GHTN…LCRT, LQES…CVER, GHQN…YMAT, GHVQ…LAQE, and GHAD…LWAY.

Belongs to the NLE1/RSA4 family. As to quaternary structure, interacts with Notch (via cytoplasmic domain). Associates with the pre-60S ribosomal particle.

The protein resides in the nucleus. Its subcellular location is the nucleolus. Its function is as follows. Plays a role in regulating Notch activity. This chain is Protein Notchless, found in Drosophila melanogaster (Fruit fly).